We begin with the raw amino-acid sequence, 309 residues long: ASC1-like protein 1 (309 aa).

6 helical membrane-spanning segments follow: residues 27-47 (FFAL…LDCF), 84-104 (CVYF…EPWF), 130-150 (AVYM…MFWE), 156-176 (FGVS…SYVF), 215-235 (FLLF…FWIL), and 260-280 (YVFN…WVLI). A TLC domain is found at 75–289 (RKFKESAWKC…IYRMLVRQIK (215 aa)).

It is found in the endoplasmic reticulum membrane. Its function is as follows. Mediates resistance to sphinganine-analog mycotoxins (SAMs) by restoring the sphingolipid biosynthesis. Could salvage the transport of GPI-anchored proteins from the endoplasmic reticulum to the Golgi apparatus in ceramides-depleted cells after SAM exposure. The chain is ASC1-like protein 1 from Oryza sativa subsp. japonica (Rice).